Consider the following 345-residue polypeptide: Ubiquitin-associated domain-containing protein 2 (345 aa).

Positions 1–39 are cleaved as a signal peptide; sequence MFTSTGSSGLYKAPLSKSLLLVPSALSLLLTLLLPHCQK. At 40–91 the chain is on the extracellular side; it reads FFVYDLHAVKHDLQIWRLICGRIICLDLKDAFCSGLLIYNFRIFERRYGSRK. A helical transmembrane segment spans residues 92–112; that stretch reads FASFLLGSWVLSALFDFILVE. Residues 113–125 are Cytoplasmic-facing; it reads AVQYSLGVTVASN. A helical transmembrane segment spans residues 126–146; the sequence is LPSGFLAPVFALFVPFHCSIP. The Extracellular segment spans residues 147–163; the sequence is RVQVAQILGPLSITNKT. N161 carries an N-linked (GlcNAc...) asparagine glycan. Residues 164–184 form a helical membrane-spanning segment; sequence LIYILGLQLFTSGSYIWIVAM. Topologically, residues 185 to 345 are cytoplasmic; it reads SGLISGMCYD…NVATNFLLQH (161 aa). Residues 287–306 form a disordered region; it reads NINYQDGPRSEQRASPPLEV. The UBA domain occupies 305–345; the sequence is EVSEEQVARLMEMGFSRGDALEALRASNNDLNVATNFLLQH.

In terms of assembly, interacts with LMBR1L, FAF2, AMFR and VCP.

Its subcellular location is the endoplasmic reticulum membrane. Restricts trafficking of FAF2 from the endoplasmic reticulum to lipid droplets. In association with LMBR1L and E3 ubiquitin-protein ligase AMFR, negatively regulates the canonical Wnt signaling pathway in the lymphocytes by promoting the ubiquitin-mediated degradation of CTNNB1 and Wnt receptors FZD6 and LRP6. The chain is Ubiquitin-associated domain-containing protein 2 (Ubac2) from Mus musculus (Mouse).